Reading from the N-terminus, the 1071-residue chain is V-type proton ATPase catalytic subunit A (1071 aa).

An N-acetylalanine modification is found at Ala-2. Thr-131 is modified (phosphothreonine). Residue 257–264 (GAFGCGKT) participates in ATP binding. Residues 494–642 (LLGLWIGDGL…LVSLARSLGL (149 aa)) enclose the DOD-type homing endonuclease domain. Ser-858 and Ser-928 each carry phosphoserine.

It belongs to the ATPase alpha/beta chains family. In terms of assembly, V-ATPase is a heteromultimeric enzyme composed of a peripheral catalytic V1 complex (components A to H) attached to an integral membrane V0 proton pore complex (components: a, c, c', c'', d, e, f and VOA1). Interacts with RAV1 and RAV2 components of the RAVE complex, which are essential for the stability and assembly of V-ATPase. This protein undergoes a protein self splicing that involves a post-translational excision of the VDE intervening region (intein) followed by peptide ligation.

It is found in the vacuole membrane. The catalysed reaction is ATP + H2O + 4 H(+)(in) = ADP + phosphate + 5 H(+)(out). Functionally, catalytic subunit of the V1 complex of vacuolar(H+)-ATPase (V-ATPase), a multisubunit enzyme composed of a peripheral complex (V1) that hydrolyzes ATP and a membrane integral complex (V0) that translocates protons. V-ATPase is responsible for acidifying and maintaining the pH of intracellular compartments. Its function is as follows. PI-SceI is an endonuclease that can cleave at a site present in a VMA1 allele that lacks the derived endonuclease segment of the open reading frame; cleavage at this site only occurs during meiosis and initiates 'homing', a genetic event that converts a VMA1 allele lacking VDE into one that contains it. In Saccharomyces cerevisiae (strain ATCC 204508 / S288c) (Baker's yeast), this protein is V-type proton ATPase catalytic subunit A.